We begin with the raw amino-acid sequence, 89 residues long: Small ribosomal subunit protein uS15 (89 aa).

It belongs to the universal ribosomal protein uS15 family. As to quaternary structure, part of the 30S ribosomal subunit. Forms a bridge to the 50S subunit in the 70S ribosome, contacting the 23S rRNA.

Functionally, one of the primary rRNA binding proteins, it binds directly to 16S rRNA where it helps nucleate assembly of the platform of the 30S subunit by binding and bridging several RNA helices of the 16S rRNA. In terms of biological role, forms an intersubunit bridge (bridge B4) with the 23S rRNA of the 50S subunit in the ribosome. This Trichodesmium erythraeum (strain IMS101) protein is Small ribosomal subunit protein uS15.